Consider the following 335-residue polypeptide: MTEIYDFDKSAWDIKGSIAPIQPTTYSDGRLVPQVRVIDPGLGDRKDECFMYMSLLGVVEDSDPLGPPIGRAFGSLPLGVGRSTAKPEKLLKEATELDIVVRRTAGLNEKLVFYNNTPLTLLTPWRKVLTTGSVFNANQVCNAVNLIPLDTPQRFRVVYMSITRLSDNGYYTVPRRMLEFRSVNAVAFNLLVTLRIDKAIGPGKIIDNTEQLPEATFMVHIGNFRRKKSEVYSADYCKMKIEKMGLVFALGGIGGTSLHIRSTGKMSKTLHAQLGFKKTLCYPLMDINEDLNRLLWRSRCKIVRIQAVLQPSVPQEFRIYDDVIINDDQGLFKVL.

Belongs to the morbillivirus/respirovirus/rubulavirus M protein family. In terms of assembly, homodimer. Dimerization is critical for virion formation. Interacts with host ANP32B.

It is found in the virion. The protein resides in the host cell membrane. The M protein has a crucial role in virus assembly and interacts with the RNP complex as well as with the viral membrane. Associates with phosphatidylserine (PS) and phosphatidylinositol 4,5-bisphosphate (PIP2) at the plasma membrane. Interaction with PIP2 triggers matrix protein lattice polymerization. Matrix proteins induce host membrane deformation and curvature necessary for virion assembly/budding. This Measles virus (strain Edmonston-AIK-C vaccine) (MeV) protein is Matrix protein (M).